The primary structure comprises 289 residues: 4-hydroxy-tetrahydrodipicolinate synthase (289 aa).

T42 contacts pyruvate. The active-site Proton donor/acceptor is the Y129. Residue K157 is the Schiff-base intermediate with substrate of the active site. Residue I198 coordinates pyruvate.

Belongs to the DapA family. Homotetramer; dimer of dimers.

Its subcellular location is the cytoplasm. The catalysed reaction is L-aspartate 4-semialdehyde + pyruvate = (2S,4S)-4-hydroxy-2,3,4,5-tetrahydrodipicolinate + H2O + H(+). It participates in amino-acid biosynthesis; L-lysine biosynthesis via DAP pathway; (S)-tetrahydrodipicolinate from L-aspartate: step 3/4. Its function is as follows. Catalyzes the condensation of (S)-aspartate-beta-semialdehyde [(S)-ASA] and pyruvate to 4-hydroxy-tetrahydrodipicolinate (HTPA). In Chlamydia caviae (strain ATCC VR-813 / DSM 19441 / 03DC25 / GPIC) (Chlamydophila caviae), this protein is 4-hydroxy-tetrahydrodipicolinate synthase.